Here is a 154-residue protein sequence, read N- to C-terminus: 6,7-dimethyl-8-ribityllumazine synthase (154 aa).

5-amino-6-(D-ribitylamino)uracil contacts are provided by residues F23, 57–59 (AYE), and 81–83 (AVI). 86–87 (AT) is a (2S)-2-hydroxy-3-oxobutyl phosphate binding site. H89 acts as the Proton donor in catalysis. F114 contributes to the 5-amino-6-(D-ribitylamino)uracil binding site. R128 contacts (2S)-2-hydroxy-3-oxobutyl phosphate.

It belongs to the DMRL synthase family.

The enzyme catalyses (2S)-2-hydroxy-3-oxobutyl phosphate + 5-amino-6-(D-ribitylamino)uracil = 6,7-dimethyl-8-(1-D-ribityl)lumazine + phosphate + 2 H2O + H(+). Its pathway is cofactor biosynthesis; riboflavin biosynthesis; riboflavin from 2-hydroxy-3-oxobutyl phosphate and 5-amino-6-(D-ribitylamino)uracil: step 1/2. Catalyzes the formation of 6,7-dimethyl-8-ribityllumazine by condensation of 5-amino-6-(D-ribitylamino)uracil with 3,4-dihydroxy-2-butanone 4-phosphate. This is the penultimate step in the biosynthesis of riboflavin. This Desulforamulus reducens (strain ATCC BAA-1160 / DSM 100696 / MI-1) (Desulfotomaculum reducens) protein is 6,7-dimethyl-8-ribityllumazine synthase.